The primary structure comprises 367 residues: Chorismate synthase (367 aa).

The NADP(+) site is built by Arg48 and Arg54. FMN contacts are provided by residues 125–127 (RSS), 238–239 (NA), Gly278, 293–297 (KPTSS), and Arg319.

It belongs to the chorismate synthase family. As to quaternary structure, homotetramer. The cofactor is FMNH2.

The catalysed reaction is 5-O-(1-carboxyvinyl)-3-phosphoshikimate = chorismate + phosphate. It participates in metabolic intermediate biosynthesis; chorismate biosynthesis; chorismate from D-erythrose 4-phosphate and phosphoenolpyruvate: step 7/7. In terms of biological role, catalyzes the anti-1,4-elimination of the C-3 phosphate and the C-6 proR hydrogen from 5-enolpyruvylshikimate-3-phosphate (EPSP) to yield chorismate, which is the branch point compound that serves as the starting substrate for the three terminal pathways of aromatic amino acid biosynthesis. This reaction introduces a second double bond into the aromatic ring system. This Stenotrophomonas maltophilia (strain R551-3) protein is Chorismate synthase.